The primary structure comprises 131 residues: Global transcriptional regulator Spx 1 (131 aa).

An intrachain disulfide couples Cys10 to Cys13.

This sequence belongs to the ArsC family. Spx subfamily. In terms of assembly, interacts with the C-terminal domain of the alpha subunit of the RNAP.

The protein resides in the cytoplasm. Global transcriptional regulator that plays a key role in stress response and exerts either positive or negative regulation of genes. Acts by interacting with the C-terminal domain of the alpha subunit of the RNA polymerase (RNAP). This interaction can enhance binding of RNAP to the promoter region of target genes and stimulate their transcription, or block interaction of RNAP with activator. The sequence is that of Global transcriptional regulator Spx 1 from Bacillus anthracis.